An 83-amino-acid polypeptide reads, in one-letter code: SPbeta prophage-derived uncharacterized protein YopE (83 aa).

Transmembrane regions (helical) follow at residues 5–25 and 60–80; these read AYFLIIWLGVGLLTGIKFIFV and VIAFFMLIGLLPLAMRITKLF.

It is found in the cell membrane. The sequence is that of SPbeta prophage-derived uncharacterized protein YopE (yopE) from Bacillus subtilis (strain 168).